The sequence spans 337 residues: D-lactate dehydrogenase (337 aa).

NAD(+)-binding positions include 156-157, D176, 207-208, N213, 234-236, and D260; these read HI, VP, and CSR. Residue R236 is part of the active site. E265 is a catalytic residue. H297 acts as the Proton donor in catalysis.

The protein belongs to the D-isomer specific 2-hydroxyacid dehydrogenase family. In terms of assembly, homodimer.

The enzyme catalyses (R)-lactate + NAD(+) = pyruvate + NADH + H(+). The chain is D-lactate dehydrogenase from Lactobacillus helveticus (Lactobacillus suntoryeus).